Reading from the N-terminus, the 441-residue chain is Gluconate 2-dehydrogenase cytochrome c subunit (441 aa).

A signal peptide spans 1–19 (MMKSILALVLGTLSFAALA). Cytochrome c domains are found at residues 26–129 (ALVK…MHGV), 173–289 (PVLA…KSLG), and 312–403 (DDSQ…RGSW). Cys40, Cys43, His44, Cys188, Cys191, His192, Cys325, Cys328, and His329 together coordinate heme c.

Heterotrimer. FAD serves as cofactor. In terms of processing, binds 3 heme c groupd covalently per subunit.

It localises to the cell membrane. It carries out the reaction D-gluconate + A = 2-dehydro-D-gluconate + AH2. Part of the heterotrimer that catalyzes the conversion of D-gluconate to 2-dehydro-D-gluconate. This Pantoea cypripedii (Pectobacterium cypripedii) protein is Gluconate 2-dehydrogenase cytochrome c subunit.